Here is a 72-residue protein sequence, read N- to C-terminus: Translational regulator CsrA (72 aa).

It belongs to the CsrA/RsmA family. Homodimer; the beta-strands of each monomer intercalate to form a hydrophobic core, while the alpha-helices form wings that extend away from the core.

The protein resides in the cytoplasm. Its function is as follows. A translational regulator that binds mRNA to regulate translation initiation and/or mRNA stability. Usually binds in the 5'-UTR at or near the Shine-Dalgarno sequence preventing ribosome-binding, thus repressing translation. Its main target seems to be the major flagellin gene, while its function is anatagonized by FliW. This chain is Translational regulator CsrA, found in Clostridium botulinum (strain Okra / Type B1).